The sequence spans 79 residues: NADH-ubiquinone oxidoreductase chain 5 (79 aa).

Transmembrane regions (helical) follow at residues 5-27 (TPIM…TNPY) and 40-57 (VMYA…FILS).

It belongs to the complex I subunit 5 family. Core subunit of respiratory chain NADH dehydrogenase (Complex I) which is composed of 45 different subunits.

It localises to the mitochondrion inner membrane. The enzyme catalyses a ubiquinone + NADH + 5 H(+)(in) = a ubiquinol + NAD(+) + 4 H(+)(out). Its function is as follows. Core subunit of the mitochondrial membrane respiratory chain NADH dehydrogenase (Complex I) which catalyzes electron transfer from NADH through the respiratory chain, using ubiquinone as an electron acceptor. Essential for the catalytic activity and assembly of complex I. The chain is NADH-ubiquinone oxidoreductase chain 5 (MT-ND5) from Macaca fascicularis (Crab-eating macaque).